Reading from the N-terminus, the 445-residue chain is tRNA modification GTPase MnmE (445 aa).

(6S)-5-formyl-5,6,7,8-tetrahydrofolate-binding residues include Arg20, Glu79, and Lys119. Residues 215 to 371 (GLKLAIIGPP…ILKNIENIAE (157 aa)) form the TrmE-type G domain. Position 225 (Asn225) interacts with K(+). Residues 225-230 (NTGKSS), 244-250 (SNIAGTT), and 269-272 (DTAG) contribute to the GTP site. Ser229 contributes to the Mg(2+) binding site. Residues Ser244, Ile246, and Thr249 each contribute to the K(+) site. Thr250 is a binding site for Mg(2+). Lys445 is a (6S)-5-formyl-5,6,7,8-tetrahydrofolate binding site.

The protein belongs to the TRAFAC class TrmE-Era-EngA-EngB-Septin-like GTPase superfamily. TrmE GTPase family. In terms of assembly, homodimer. Heterotetramer of two MnmE and two MnmG subunits. K(+) is required as a cofactor.

It localises to the cytoplasm. Functionally, exhibits a very high intrinsic GTPase hydrolysis rate. Involved in the addition of a carboxymethylaminomethyl (cmnm) group at the wobble position (U34) of certain tRNAs, forming tRNA-cmnm(5)s(2)U34. The chain is tRNA modification GTPase MnmE from Rickettsia typhi (strain ATCC VR-144 / Wilmington).